A 116-amino-acid polypeptide reads, in one-letter code: Large ribosomal subunit protein uL22 (116 aa).

Belongs to the universal ribosomal protein uL22 family. In terms of assembly, part of the 50S ribosomal subunit.

This protein binds specifically to 23S rRNA; its binding is stimulated by other ribosomal proteins, e.g. L4, L17, and L20. It is important during the early stages of 50S assembly. It makes multiple contacts with different domains of the 23S rRNA in the assembled 50S subunit and ribosome. Its function is as follows. The globular domain of the protein is located near the polypeptide exit tunnel on the outside of the subunit, while an extended beta-hairpin is found that lines the wall of the exit tunnel in the center of the 70S ribosome. The protein is Large ribosomal subunit protein uL22 of Gloeobacter violaceus (strain ATCC 29082 / PCC 7421).